A 382-amino-acid chain; its full sequence is MNSTLFSRVENYSVHYNVSENSPFLAFENDDCHLPLAVIFTLALAYGAVIILGVSGNLALIIIILKQKEMRNVTNILIVNLSFSDLLVAVMCLPFTFVYTLMDHWVFGETMCKLNPFVQCVSITVSIFSLVLIAVERHQLIINPRGWRPNNRHAYIGITVIWVLAVASSLPFVIYQILTDEPFQNVSLAAFKDKYVCFDKFPSDSHRLSYTTLLLVLQYFGPLCFIFICYFKIYIRLKRRNNMMDKIRDSKYRSSETKRINVMLLSIVVAFAVCWLPLTIFNTVFDWNHQIIATCNHNLLFLLCHLTAMISTCVNPIFYGFLNKNFQRDLQFFFNFCDFRSRDDDYETIAMSTMHTDVSKTSLKQASPVAFKKISMNDNEKI.

Residues 1-33 are Extracellular-facing; it reads MNSTLFSRVENYSVHYNVSENSPFLAFENDDCH. Asn-2, Asn-11, and Asn-17 each carry an N-linked (GlcNAc...) asparagine glycan. The helical transmembrane segment at 34–54 threads the bilayer; the sequence is LPLAVIFTLALAYGAVIILGV. At 55–75 the chain is on the cytoplasmic side; that stretch reads SGNLALIIIILKQKEMRNVTN. A helical membrane pass occupies residues 76–96; it reads ILIVNLSFSDLLVAVMCLPFT. The Extracellular portion of the chain corresponds to 97 to 115; sequence FVYTLMDHWVFGETMCKLN. Cys-112 and Cys-197 form a disulfide bridge. The chain crosses the membrane as a helical span at residues 116 to 136; it reads PFVQCVSITVSIFSLVLIAVE. The Cytoplasmic portion of the chain corresponds to 137–153; the sequence is RHQLIINPRGWRPNNRH. Residues 154–174 traverse the membrane as a helical segment; sequence AYIGITVIWVLAVASSLPFVI. Residues 175–210 are Extracellular-facing; sequence YQILTDEPFQNVSLAAFKDKYVCFDKFPSDSHRLSY. A helical transmembrane segment spans residues 211–231; the sequence is TTLLLVLQYFGPLCFIFICYF. Residues 232–259 are Cytoplasmic-facing; the sequence is KIYIRLKRRNNMMDKIRDSKYRSSETKR. A helical transmembrane segment spans residues 260 to 280; it reads INVMLLSIVVAFAVCWLPLTI. The Extracellular portion of the chain corresponds to 281–298; sequence FNTVFDWNHQIIATCNHN. Residues 299-319 form a helical membrane-spanning segment; the sequence is LLFLLCHLTAMISTCVNPIFY. Topologically, residues 320–382 are cytoplasmic; sequence GFLNKNFQRD…KISMNDNEKI (63 aa). The S-palmitoyl cysteine moiety is linked to residue Cys-337. A phosphoserine mark is found at Ser-367 and Ser-375.

It belongs to the G-protein coupled receptor 1 family. In terms of tissue distribution, brain.

The protein resides in the cell membrane. In terms of biological role, receptor for neuropeptide Y and peptide YY. The sequence is that of Neuropeptide Y receptor type 1 (Npy1r) from Rattus norvegicus (Rat).